Here is a 799-residue protein sequence, read N- to C-terminus: ATP-dependent RNA helicase DBP7 (799 aa).

Disordered stretches follow at residues 34–177 (KALR…RRIR) and 201–229 (DRIA…NAAL). 5 stretches are compositionally biased toward basic and acidic residues: residues 35–49 (ALRE…KKEQ), 56–66 (IEDRMKRREQD), 73–100 (KPYD…KSYD), 114–132 (EKYQ…ERWV), and 139–172 (NRRD…DGSL). The segment covering 208–220 (VQMEDEEEEEAEN) has biased composition (acidic residues). Residues 233–261 (TTFSGLGCSQRLVDALVGMQLAKPTKIQR) carry the Q motif motif. The Helicase ATP-binding domain occupies 265-465 (PRLIQRERDL…KSTLKDADWV (201 aa)). Residues 278–285 (AQTGSGKT) and 306–313 (TGLFAVIL) each bind ATP. The DEAD box signature appears at 391-394 (DEGD). Residues 511-679 (DILQSSEKTN…NILAAGFGGK (169 aa)) form the Helicase C-terminal domain. Residues 750-799 (KLGKKKDPEKIKVNKDGSLDETQARKKMLDRSRKHVYNSGESAMGGYVLE) form a disordered region. A compositionally biased stretch (basic and acidic residues) spans 754-780 (KKDPEKIKVNKDGSLDETQARKKMLDR).

Belongs to the DEAD box helicase family. DDX31/DBP7 subfamily.

It is found in the nucleus. The protein localises to the nucleolus. It catalyses the reaction ATP + H2O = ADP + phosphate + H(+). In terms of biological role, ATP-binding RNA helicase involved in the biogenesis of 60S ribosomal subunits and is required for the normal formation of 25S and 5.8S rRNAs. This chain is ATP-dependent RNA helicase DBP7 (DBP7), found in Yarrowia lipolytica (strain CLIB 122 / E 150) (Yeast).